The primary structure comprises 940 residues: PTS system glucose-specific EIICBA component (940 aa).

In terms of domain architecture, PTS EIIC type-1; first part spans 1–284 (MQIKAQDTGQ…YAPLWYTSAG (284 aa)). The next 5 helical transmembrane spans lie at 43–63 (LMIP…GDAI), 83–103 (GGDV…AITF), 112–132 (FSAF…ILPF), 175–195 (VFGG…FYAI), and 209–229 (FVPI…LMIW). The unknown stretch occupies residues 285–478 (GSLQEIVNQQ…VNSFRVAVES (194 aa)). Positions 479 to 630 (LNPAQYSQGK…FNLATPGRGG (152 aa)) constitute a PTS EIIC type-1; second part domain. 5 helical membrane-spanning segments follow: residues 487 to 507 (GKFP…ILAA), 515 to 535 (AASI…TEPF), 537 to 557 (FTFL…LAAV), 564 to 584 (ILGA…ILYG), and 598 to 618 (LVPI…YFLI). The 83-residue stretch at 661–743 (QIEAGILLQA…QDIIQGKVNW (83 aa)) folds into the PTS EIIB type-1 domain. Residue Cys-683 is the Phosphocysteine intermediate; for EIIB activity of the active site. Residues 794 to 907 (DETFKQKLVG…NPITPFVVMK (114 aa)) enclose the PTS EIIA type-1 domain. His-847 acts as the Tele-phosphohistidine intermediate; for EIIA activity in catalysis.

The protein resides in the cell membrane. It catalyses the reaction N(pros)-phospho-L-histidyl-[protein] + D-glucose(out) = D-glucose 6-phosphate(in) + L-histidyl-[protein]. The phosphoenolpyruvate-dependent sugar phosphotransferase system (sugar PTS), a major carbohydrate active transport system, catalyzes the phosphorylation of incoming sugar substrates concomitantly with their translocation across the cell membrane. This system is involved in glucose transport. This Mycoplasma pneumoniae (strain ATCC 29342 / M129 / Subtype 1) (Mycoplasmoides pneumoniae) protein is PTS system glucose-specific EIICBA component (ptsG).